The primary structure comprises 188 residues: Tetratricopeptide repeat protein 36 (188 aa).

3 TPR repeats span residues 50–83, 85–117, and 122–155; these read SKAL…LPER, SAYN…SGGR, and RQGF…GSPF.

It belongs to the TTC36 family.

This chain is Tetratricopeptide repeat protein 36 (TTC36), found in Bos taurus (Bovine).